A 552-amino-acid chain; its full sequence is Chaperonin GroEL (552 aa).

Residues 30 to 33, Lys51, 87 to 91, Gly415, 479 to 481, and Asp495 each bind ATP; these read TLGP, DGTTT, and NAA.

This sequence belongs to the chaperonin (HSP60) family. As to quaternary structure, forms a cylinder of 14 subunits composed of two heptameric rings stacked back-to-back. Interacts with the co-chaperonin GroES.

It localises to the cytoplasm. The enzyme catalyses ATP + H2O + a folded polypeptide = ADP + phosphate + an unfolded polypeptide.. Functionally, together with its co-chaperonin GroES, plays an essential role in assisting protein folding. The GroEL-GroES system forms a nano-cage that allows encapsulation of the non-native substrate proteins and provides a physical environment optimized to promote and accelerate protein folding. The sequence is that of Chaperonin GroEL from Nitrosospira multiformis (strain ATCC 25196 / NCIMB 11849 / C 71).